The sequence spans 20 residues: Short cationic peptide-4d (20 aa).

Position 20 is a glutamic acid 1-amide (E20).

Expressed by the venom gland.

Its subcellular location is the secreted. The sequence is that of Short cationic peptide-4d from Cupiennius salei (American wandering spider).